The sequence spans 251 residues: Imidazole glycerol phosphate synthase subunit HisF (251 aa).

Residues D11 and D130 contribute to the active site.

The protein belongs to the HisA/HisF family. In terms of assembly, heterodimer of HisH and HisF.

The protein resides in the cytoplasm. It catalyses the reaction 5-[(5-phospho-1-deoxy-D-ribulos-1-ylimino)methylamino]-1-(5-phospho-beta-D-ribosyl)imidazole-4-carboxamide + L-glutamine = D-erythro-1-(imidazol-4-yl)glycerol 3-phosphate + 5-amino-1-(5-phospho-beta-D-ribosyl)imidazole-4-carboxamide + L-glutamate + H(+). It participates in amino-acid biosynthesis; L-histidine biosynthesis; L-histidine from 5-phospho-alpha-D-ribose 1-diphosphate: step 5/9. In terms of biological role, IGPS catalyzes the conversion of PRFAR and glutamine to IGP, AICAR and glutamate. The HisF subunit catalyzes the cyclization activity that produces IGP and AICAR from PRFAR using the ammonia provided by the HisH subunit. The sequence is that of Imidazole glycerol phosphate synthase subunit HisF from Streptococcus mutans serotype c (strain ATCC 700610 / UA159).